A 1218-amino-acid polypeptide reads, in one-letter code: ABC transporter NFT1 (1218 aa).

Topologically, residues 1 to 29 are extracellular; that stretch reads MIKNGTCPYWERDDLSECARREYIEFKFP. An N-linked (GlcNAc...) asparagine glycan is attached at Asn4. Residues 30–50 traverse the membrane as a helical segment; sequence LFILLTGMIYAFCKVFRAFYL. Residues 51–103 lie on the Cytoplasmic side of the membrane; sequence RGKNHTNEAPEFEEQGNGNHEYARFSVLRLKSAWESRSFCNVNNRSTFDKFKK. A helical transmembrane segment spans residues 104-124; that stretch reads FIEGAFIVLQLTIHLYILSSM. Residues 125–130 lie on the Extracellular side of the membrane; sequence PMDNKK. A helical membrane pass occupies residues 131 to 151; it reads FFHQGFLVQMFLWILLLVVIT. Over 152 to 169 the chain is Cytoplasmic; that stretch reads LRLISASQSFRWVLACKR. A helical transmembrane segment spans residues 170-190; the sequence is DLWAVSFYSYASLFTLSILPL. Topologically, residues 191 to 201 are extracellular; sequence RSVFIGKIKDK. A helical membrane pass occupies residues 202–222; sequence IMVKYIISETFIDLALLLLLS. Residues 223–302 are Cytoplasmic-facing; the sequence is TSSIEGTRYS…SSKKGRLLPN (80 aa). The helical transmembrane segment at 303 to 323 threads the bilayer; the sequence is IICYFKAVFISQLFLAFVSSF. Positions 311-621 constitute an ABC transmembrane type-1 1 domain; sequence FISQLFLAFV…IASTVSLLIQ (311 aa). The Extracellular portion of the chain corresponds to 324-351; sequence LNFVPSLLMPRILSYVNDPKSKSWNLVS. A helical transmembrane segment spans residues 352–374; that stretch reads LYVSSMLVSKIIATTCRGQGLFL. Over 375-449 the chain is Cytoplasmic; the sequence is GEKGTMQLRT…VMSIDAFKVS (75 aa). Residues 410–434 are disordered; sequence NASTSFEENPDSSEAEPRKKSSRKD. Positions 424–434 are enriched in basic and acidic residues; sequence AEPRKKSSRKD. A helical membrane pass occupies residues 450 to 470; sequence EAMNTFYLACEAVFMTVTALM. Residues 471–481 lie on the Extracellular side of the membrane; that stretch reads ILYSLLGWSAF. A helical transmembrane segment spans residues 482–504; the sequence is AGTFALLAMIPLNFWCATFYGNY. Residues 505 to 558 lie on the Cytoplasmic side of the membrane; that stretch reads QADQLILTDKRTSGISEALNSIRVIKLLAWENLFYQKIINVRDGEIRLLKKKAT. Residues 559–579 form a helical membrane-spanning segment; the sequence is IFFLNHLIWFFGPTLVSAITF. Residues 580-584 lie on the Extracellular side of the membrane; it reads SVFIK. A helical membrane pass occupies residues 585–605; the sequence is FQNQTLTPTIAFTALSLFAIL. Residues 606–953 are Cytoplasmic-facing; that stretch reads RTPMDQIAST…KFSAYKWLAD (348 aa). An ABC transporter domain is found at 651–892; the sequence is FGFEDASMEW…NEFLRESINN (242 aa). 686-693 contacts ATP; that stretch reads GPTGSGKS. Residues 892–901 are compositionally biased toward polar residues; sequence NDSKNTTHNQ. The disordered stretch occupies residues 892 to 926; sequence NDSKNTTHNQIDLKRSTTSKKTKNGDPEGGNSQDE. The helical transmembrane segment at 954 to 974 threads the bilayer; sequence YFGGLGVVFVFTSSSILIHGI. Residues 961–1218 form the ABC transmembrane type-1 2 domain; sequence VFVFTSSSIL…SSVMIIMKAS (258 aa). The Extracellular segment spans residues 975-1013; it reads TLSQGFWLRYWLDTGSSGSKSTWLYRIVEGHSNIYFLLT. Residues 1014–1034 traverse the membrane as a helical segment; it reads YIIIGLVSSFLTSGKVWIAII. Topologically, residues 1035 to 1082 are cytoplasmic; sequence SGTNVTKKIFAKLLSSILYAKLRFHNVTPTGRIMNRFSKDMDIIDQQL. Residues 1083-1105 form a helical membrane-spanning segment; it reads IPNFEGLSYSVVVCLWIILLIGY. Over 1106–1109 the chain is Extracellular; it reads VTPQ. The helical transmembrane segment at 1110 to 1132 threads the bilayer; the sequence is FLLFAIPLCALYYTVCTLYLRAS. Topologically, residues 1133-1197 are cytoplasmic; sequence RELKRIDNIN…NMATEWITYR (65 aa). A helical transmembrane segment spans residues 1198–1218; it reads VDIIGTLVLFSSSVMIIMKAS.

The protein belongs to the ABC transporter superfamily. ABCC family. Conjugate transporter (TC 3.A.1.208) subfamily.

The protein resides in the membrane. The protein is ABC transporter NFT1 (NFT1) of Saccharomyces cerevisiae (strain ATCC 204508 / S288c) (Baker's yeast).